A 227-amino-acid chain; its full sequence is ATP-dependent dethiobiotin synthetase BioD (227 aa).

12 to 17 (DAGKTH) is a binding site for ATP. Thr-16 is a binding site for Mg(2+). Lys-37 is a catalytic residue. Substrate is bound at residue Ser-41. ATP contacts are provided by residues Asp-54, 116 to 119 (EGAG), 176 to 177 (NQ), and 205 to 207 (PYS). The Mg(2+) site is built by Asp-54 and Glu-116.

Belongs to the dethiobiotin synthetase family. As to quaternary structure, homodimer. Requires Mg(2+) as cofactor.

The protein localises to the cytoplasm. The enzyme catalyses (7R,8S)-7,8-diammoniononanoate + CO2 + ATP = (4R,5S)-dethiobiotin + ADP + phosphate + 3 H(+). It functions in the pathway cofactor biosynthesis; biotin biosynthesis; biotin from 7,8-diaminononanoate: step 1/2. In terms of biological role, catalyzes a mechanistically unusual reaction, the ATP-dependent insertion of CO2 between the N7 and N8 nitrogen atoms of 7,8-diaminopelargonic acid (DAPA, also called 7,8-diammoniononanoate) to form a ureido ring. The polypeptide is ATP-dependent dethiobiotin synthetase BioD (Pseudoalteromonas translucida (strain TAC 125)).